Reading from the N-terminus, the 458-residue chain is MLQVDVVILAAGMGKRMCSSLPKVLHPLAGKPILSHVLDIARTLSPERICVVFGYGGELVRQVIGDHSDLIWVKQAQQLGTGHAVKQALPYLGNKGVTLVLFGDVPLVKSDTLKALIEKAREDNLVLLTVELDNPTGYGRIVRDPVTNRIQAIVEEKDASQSQKKIREINTGIMVLPNGRLGNWLDNLSDANTQGEYYLTDIIAMAVDAGIPIETSSPASDWEVSGVNDKIQLSILERAHQQDTANRLMEQGVMFADPARFDVRGRLVCGNDVEIDINCIFEGNVRLGNNVKIHANCILRNVIVSDGSVVHPFSLIEDAEVGKNCRIGPYARIRPGTQLDDAVHVGNFVEIKNSHIASESKVNHLSYVGDTEMGRRVNIGAGAITCNYDGAFKHRTVIEDDVFIGSDTQLVAPVTVARGSTIGAGSTITRDTPEGQLTLSRTKQTSIANWKRPRKDRN.

The tract at residues 1–230 (MLQVDVVILA…DWEVSGVNDK (230 aa)) is pyrophosphorylase. UDP-N-acetyl-alpha-D-glucosamine is bound by residues 9–12 (LAAG), Lys23, Gln75, and 80–81 (GT). Asp104 lines the Mg(2+) pocket. Gly139, Glu155, Asn170, and Asn228 together coordinate UDP-N-acetyl-alpha-D-glucosamine. Mg(2+) is bound at residue Asn228. Positions 231–251 (IQLSILERAHQQDTANRLMEQ) are linker. The N-acetyltransferase stretch occupies residues 252–458 (GVMFADPARF…NWKRPRKDRN (207 aa)). UDP-N-acetyl-alpha-D-glucosamine-binding residues include Arg334 and Lys352. His364 functions as the Proton acceptor in the catalytic mechanism. 2 residues coordinate UDP-N-acetyl-alpha-D-glucosamine: Tyr367 and Asn378. Acetyl-CoA is bound by residues Ala381, 387-388 (NY), Ser406, Ala424, and Arg441.

This sequence in the N-terminal section; belongs to the N-acetylglucosamine-1-phosphate uridyltransferase family. In the C-terminal section; belongs to the transferase hexapeptide repeat family. In terms of assembly, homotrimer. Requires Mg(2+) as cofactor.

Its subcellular location is the cytoplasm. The catalysed reaction is alpha-D-glucosamine 1-phosphate + acetyl-CoA = N-acetyl-alpha-D-glucosamine 1-phosphate + CoA + H(+). It catalyses the reaction N-acetyl-alpha-D-glucosamine 1-phosphate + UTP + H(+) = UDP-N-acetyl-alpha-D-glucosamine + diphosphate. The protein operates within nucleotide-sugar biosynthesis; UDP-N-acetyl-alpha-D-glucosamine biosynthesis; N-acetyl-alpha-D-glucosamine 1-phosphate from alpha-D-glucosamine 6-phosphate (route II): step 2/2. It functions in the pathway nucleotide-sugar biosynthesis; UDP-N-acetyl-alpha-D-glucosamine biosynthesis; UDP-N-acetyl-alpha-D-glucosamine from N-acetyl-alpha-D-glucosamine 1-phosphate: step 1/1. Its pathway is bacterial outer membrane biogenesis; LPS lipid A biosynthesis. In terms of biological role, catalyzes the last two sequential reactions in the de novo biosynthetic pathway for UDP-N-acetylglucosamine (UDP-GlcNAc). The C-terminal domain catalyzes the transfer of acetyl group from acetyl coenzyme A to glucosamine-1-phosphate (GlcN-1-P) to produce N-acetylglucosamine-1-phosphate (GlcNAc-1-P), which is converted into UDP-GlcNAc by the transfer of uridine 5-monophosphate (from uridine 5-triphosphate), a reaction catalyzed by the N-terminal domain. The sequence is that of Bifunctional protein GlmU from Nitrosomonas europaea (strain ATCC 19718 / CIP 103999 / KCTC 2705 / NBRC 14298).